We begin with the raw amino-acid sequence, 118 residues long: Large ribosomal subunit protein uL18 (118 aa).

This sequence belongs to the universal ribosomal protein uL18 family. In terms of assembly, part of the 50S ribosomal subunit; part of the 5S rRNA/L5/L18/L25 subcomplex. Contacts the 5S and 23S rRNAs.

Functionally, this is one of the proteins that bind and probably mediate the attachment of the 5S RNA into the large ribosomal subunit, where it forms part of the central protuberance. This Dechloromonas aromatica (strain RCB) protein is Large ribosomal subunit protein uL18.